Consider the following 328-residue polypeptide: Tetraacyldisaccharide 4'-kinase (328 aa).

55-62 serves as a coordination point for ATP; sequence TAGGNGKT.

Belongs to the LpxK family.

The enzyme catalyses a lipid A disaccharide + ATP = a lipid IVA + ADP + H(+). It participates in glycolipid biosynthesis; lipid IV(A) biosynthesis; lipid IV(A) from (3R)-3-hydroxytetradecanoyl-[acyl-carrier-protein] and UDP-N-acetyl-alpha-D-glucosamine: step 6/6. Its function is as follows. Transfers the gamma-phosphate of ATP to the 4'-position of a tetraacyldisaccharide 1-phosphate intermediate (termed DS-1-P) to form tetraacyldisaccharide 1,4'-bis-phosphate (lipid IVA). The polypeptide is Tetraacyldisaccharide 4'-kinase (Escherichia coli O7:K1 (strain IAI39 / ExPEC)).